Reading from the N-terminus, the 238-residue chain is MEEGLQRCFVLHRRPYSESSLILDVFSEEYGRLSIISKGARSKRSNLKGVLQAFTPLLMKWSGKGSMRTLRQAETISLGIPLTGINLYSAMYINELLVRVVEQETPYPALFLDYLTALTELAQSTNPEPALRRFELALLSAMGYGVDFLHCAGSGEMVSPEMTYRYREQQGFMASIRHDPLMSFKGNELIAISERRFTTPEQLKAAKRFTRIALKPYLGGKPLKSRELFLPRTRSILK.

Belongs to the RecO family.

Its function is as follows. Involved in DNA repair and RecF pathway recombination. In Aliivibrio fischeri (strain ATCC 700601 / ES114) (Vibrio fischeri), this protein is DNA repair protein RecO.